Here is a 1396-residue protein sequence, read N- to C-terminus: Integrin alpha-PS2 (1396 aa).

The first 31 residues, 1 to 31 (MSGDSIHRRRMALHCPITSLILLLIAMSAHG), serve as a signal peptide directing secretion. The Extracellular segment spans residues 32–1341 (YNIDLPSYVR…EPEPLQVPDV (1310 aa)). 7 FG-GAP repeats span residues 36–106 (LPSY…DCKL), 117–174 (NVDK…FTSH), 186–239 (RTNN…FPFK), 266–317 (STSE…RWNM), 318–383 (ANIF…TEEK), 386–445 (TTEH…GPLA), and 452–514 (KSEQ…FASN). Residue Asn69 is glycosylated (N-linked (GlcNAc...) asparagine). The N-linked (GlcNAc...) asparagine glycan is linked to Asn209. N-linked (GlcNAc...) asparagine glycosylation is present at Asn322. Asn584, Asn598, Asn741, Asn783, Asn833, and Asn959 each carry an N-linked (GlcNAc...) asparagine glycan. Disordered regions lie at residues 960 to 1107 (STDA…LGTL) and 1159 to 1246 (PGFQ…KPLQ). Residues 963-979 (AGDKLSPKQVEQRRQED) are compositionally biased toward basic and acidic residues. The segment covering 997-1006 (QAVQEPQVNQ) has biased composition (polar residues). The N-linked (GlcNAc...) asparagine glycan is linked to Asn1005. Composition is skewed to low complexity over residues 1007–1021 (TSFTTYSTSSSSSGS) and 1060–1071 (QQQQQHQQLLLA). The segment covering 1082 to 1099 (VTFNDKSQFGGRNNNFHT) has biased composition (polar residues). Composition is skewed to low complexity over residues 1162–1182 (QGQTSYQGQTQYSGQPGGYQT) and 1217–1226 (SSSSSSSSSS). Asn1299 and Asn1307 each carry an N-linked (GlcNAc...) asparagine glycan. Residues 1342–1366 (VPLWVVVLAACAGALIFLLLVWLLY) traverse the membrane as a helical segment. Over 1367 to 1396 (KCGFFNRNRPTDHSQERQPLRNGYHGDEHL) the chain is Cytoplasmic. The segment at 1377–1396 (TDHSQERQPLRNGYHGDEHL) is disordered.

Belongs to the integrin alpha chain family. Heterodimer of an alpha and a beta subunit. The alpha subunit is composed of a heavy and a light chain linked by a disulfide bond. Alpha-PS2 associates with beta-PS. In terms of processing, the heavy-light chain cleavage site is either in 1230-1231, or 1233-1234, or 1243-1244. As to expression, in ovaries, highly expressed in follicle cells. At syncytial blastoderm stage, expressed in the embryonic mesodermal precursors but not in the ectoderm. At embryonic stages 7 and 10, expression is restricted to the mesoderm. At stage 12, expressed in the gonadal sheath and the interstitial cells of the gonad. In stage 16 embryos, expressed in the somatic and visceral muscles where localizes to sites of attachment between adjacent muscles. In third larval instar wing imaginal disk, expressed in the ventral compartment and in a subset of adepithelial and peripodial cells (at protein level).

It is found in the apical cell membrane. It localises to the lateral cell membrane. The protein resides in the basal cell membrane. In terms of biological role, alpha-PS2/beta-PS is a receptor for Tig, wb and Ten-m. Involved in the function and/or development of the olfactory system. This Drosophila melanogaster (Fruit fly) protein is Integrin alpha-PS2 (if).